The primary structure comprises 253 residues: Putative enoyl-CoA hydratase (253 aa).

Glu-131 is a catalytic residue.

It belongs to the enoyl-CoA hydratase/isomerase family. As to quaternary structure, homohexamer; dimer of trimers.

It carries out the reaction a (3S)-3-hydroxyacyl-CoA = a (2E)-enoyl-CoA + H2O. The chain is Putative enoyl-CoA hydratase from Thermus thermophilus (strain ATCC 27634 / DSM 579 / HB8).